The primary structure comprises 191 residues: dTTP/UTP pyrophosphatase (191 aa).

Catalysis depends on Asp65, which acts as the Proton acceptor.

The protein belongs to the Maf family. YhdE subfamily. A divalent metal cation serves as cofactor.

Its subcellular location is the cytoplasm. The catalysed reaction is dTTP + H2O = dTMP + diphosphate + H(+). It catalyses the reaction UTP + H2O = UMP + diphosphate + H(+). Its function is as follows. Nucleoside triphosphate pyrophosphatase that hydrolyzes dTTP and UTP. May have a dual role in cell division arrest and in preventing the incorporation of modified nucleotides into cellular nucleic acids. The chain is dTTP/UTP pyrophosphatase from Leptospira biflexa serovar Patoc (strain Patoc 1 / Ames).